A 325-amino-acid polypeptide reads, in one-letter code: Glucosyl-3-phosphoglycerate synthase (325 aa).

UDP-alpha-D-glucose contacts are provided by residues 37–41, S71, K104, and 124–125; these read PSLNE and DS. Position 126 (D126) interacts with Mn(2+). 171-174 lines the (2R)-3-phosphoglycerate pocket; that stretch reads GRVT. UDP-alpha-D-glucose contacts are provided by residues 216-219 and 243-248; these read YGVE and RIHDNQ. H245 is a Mn(2+) binding site. Residue N247 coordinates (2R)-3-phosphoglycerate.

Belongs to the glycosyltransferase 2 family. Homodimer in solution. Requires Co(2+) as cofactor. The cofactor is Mg(2+). Mn(2+) serves as cofactor. Ni(2+) is required as a cofactor. It depends on Zn(2+) as a cofactor.

It carries out the reaction an NDP-alpha-D-glucose + (2R)-3-phosphoglycerate = (2R)-2-O-(alpha-D-glucopyranosyl)-3-phospho-glycerate + a ribonucleoside 5'-diphosphate + H(+). The enzyme catalyses (2R)-3-phosphoglycerate + UDP-alpha-D-glucose = (2R)-2-O-(alpha-D-glucopyranosyl)-3-phospho-glycerate + UDP + H(+). It catalyses the reaction ADP-alpha-D-glucose + (2R)-3-phosphoglycerate = (2R)-2-O-(alpha-D-glucopyranosyl)-3-phospho-glycerate + ADP + H(+). With respect to regulation, inhibited by ADP and EDTA. Involved in the biosynthesis of the compatible solute mannosylglucosylglycerate through a phosphorylating pathway. Catalyzes the transfer of the glucose moiety from a nuleotide sugar such as UDP-alpha-D-glucose to the position 2 of 3-phospho-D-glycerate (3-PGA) to form glucosyl-3-phosphoglycerate (GPG). UDP-glucose is the preferred substrate, but it can be partially replaced by ADP-glucose. The protein is Glucosyl-3-phosphoglycerate synthase of Petrotoga mobilis (strain DSM 10674 / SJ95).